We begin with the raw amino-acid sequence, 628 residues long: Beta-galactosidase large subunit (628 aa).

Glu468 (proton donor) is an active-site residue. Glu536 acts as the Nucleophile in catalysis.

The protein belongs to the glycosyl hydrolase 2 family. In terms of assembly, heterodimer of a large (LacL) and a small subunit (LacM).

The catalysed reaction is Hydrolysis of terminal non-reducing beta-D-galactose residues in beta-D-galactosides.. In terms of biological role, component of a beta-galactosidase. The protein is Beta-galactosidase large subunit of Lactobacillus helveticus (Lactobacillus suntoryeus).